A 215-amino-acid polypeptide reads, in one-letter code: MOB kinase activator-like 1A (215 aa).

Residues 1–29 are disordered; that stretch reads MSLFGLGSRNQKTFRPKKSAPTGSKGAQL. Zn(2+) is bound by residues Cys80, Cys85, His162, and His167.

Belongs to the MOB1/phocein family. As to expression, isoform 1 is constitutively expressed. Isoform 2 is specifically expressed in flowers bud during sporogenesis and gametogenesis.

It localises to the cytoplasm. It is found in the cytoskeleton. The protein resides in the phragmoplast. The sequence is that of MOB kinase activator-like 1A from Medicago sativa subsp. falcata (Sickle medic).